The primary structure comprises 54 residues: UPF0391 membrane protein Tbd_2238 (54 aa).

A run of 2 helical transmembrane segments spans residues 5 to 25 and 28 to 48; these read ALVF…GIAA and VGIA…TFVV.

Belongs to the UPF0391 family.

The protein resides in the cell membrane. The chain is UPF0391 membrane protein Tbd_2238 from Thiobacillus denitrificans (strain ATCC 25259 / T1).